We begin with the raw amino-acid sequence, 1170 residues long: Thrombospondin-1 (1170 aa).

The N-terminal stretch at 1 to 18 (MGLAWGLGVLLLLHACGS) is a signal peptide. The segment at 47–95 (RLVKGPDPSSPAFRIEDANLIPPVPDKKFQDLVDAVRAEKGFLLLASLR) is heparin-binding. Residues 65-270 (NLIPPVPDKK…HKTKDLQAIC (206 aa)) enclose the Laminin G-like domain. The cysteines at positions 171 and 232 are disulfide-linked. Residues asparagine 248 and asparagine 360 are each glycosylated (N-linked (GlcNAc...) asparagine). In terms of domain architecture, VWFC spans 316 to 373 (PLCYHNGVQYRTGDEWTVDSCTECRCQNSVTICKKVSCPIMPCSNATVPDGECCPRCW). 3 consecutive TSP type-1 domains span residues 379-429 (DDGW…QECD), 435-490 (DGGW…DSCP), and 492-547 (NGGW…QDCP). 27 disulfides stabilise this stretch: cysteine 391–cysteine 423, cysteine 395–cysteine 428, cysteine 406–cysteine 413, cysteine 447–cysteine 484, cysteine 451–cysteine 489, cysteine 462–cysteine 474, cysteine 504–cysteine 541, cysteine 508–cysteine 546, cysteine 519–cysteine 531, cysteine 551–cysteine 562, cysteine 556–cysteine 572, cysteine 575–cysteine 586, cysteine 592–cysteine 608, cysteine 599–cysteine 617, cysteine 620–cysteine 644, cysteine 650–cysteine 663, cysteine 657–cysteine 676, cysteine 678–cysteine 689, cysteine 705–cysteine 713, cysteine 718–cysteine 738, cysteine 754–cysteine 774, cysteine 777–cysteine 797, cysteine 813–cysteine 833, cysteine 836–cysteine 856, cysteine 874–cysteine 894, cysteine 910–cysteine 930, and cysteine 946–cysteine 1167. In terms of domain architecture, EGF-like 1 spans 547–587 (PIDGCLSNPCFAGVQCTSYPDGSWKCGACPPGYSGDGVECK). O-linked (Xyl) serine glycosylation occurs at serine 553. The EGF-like 2 domain maps to 646-690 (PRNPCTDGTHDCNKNAKCNYLGHYSDPMYRCECKPGYAGNGIICG). 8 TSP type-3 repeats span residues 691-726 (EDTD…NSGQ), 727-762 (EDYD…NPAQ), 763-785 (YDYD…NPDQ), 786-821 (ADTD…NVDQ), 822-844 (KDTD…NPDQ), 845-882 (LDSD…NANQ), 883-918 (ADHD…NPDQ), and 919-954 (KDSD…DISE). Asparagine 708 carries an N-linked (GlcNAc...) asparagine glycan. Residues 839–944 (EHNPDQLDSD…DQDKVPDIDD (106 aa)) are disordered. 3 stretches are compositionally biased toward basic and acidic residues: residues 840 to 854 (HNPD…RIGD), 883 to 894 (ADHDKDGKGDAC), and 917 to 941 (DQKD…KVPD). The short motif at 926–928 (RGD) is the Cell attachment site element. The 213-residue stretch at 958–1170 (RRFQMIPLDP…SDLKYECRDS (213 aa)) folds into the TSP C-terminal domain. 2 N-linked (GlcNAc...) asparagine glycosylation sites follow: asparagine 1067 and asparagine 1085.

It belongs to the thrombospondin family. Homotrimer; disulfide-linked. Can bind to fibrinogen, fibronectin, laminin, type V collagen and integrins alpha-V/beta-1, alpha-V/beta-3 and alpha-IIb/beta-3. Binds heparin. Interacts (via the C-terminal domain) with CD47. Interacts (via the TSP type I repeats) with CD36; the interaction conveys an antiangiogenic effect. Interacts (via the TSP type I repeats) with HRG; the interaction blocks the antiangiogenic effect of THBS1 with CD36. Interacts with ATF6 (via lumenal domain). Interacts with FN1; this interaction is enhanced by TNFAIP6, which may act as a bridging molecule between FN1 and THBS1. Interacts with SIRPA; the interaction stimulates phosphorylation of SIRPA. Odontoblasts.

Its subcellular location is the secreted. It is found in the cell surface. The protein resides in the extracellular space. The protein localises to the extracellular matrix. It localises to the endoplasmic reticulum. Its subcellular location is the sarcoplasmic reticulum. Adhesive glycoprotein that mediates cell-to-cell and cell-to-matrix interactions. Multifunctional, involved in inflammation, angiogenesis, wound healing, reactive oxygen species (ROS) signaling, nitrous oxide (NO) signaling, apoptosis, senescence, aging, cellular self-renewal, stemness, and cardiovascular and metabolic homeostasis. Negatively modulates dendritic cell activation and cytokine release, as part of an autocrine feedback loop, contributing to the resolution of inflammation and immune homeostasis. Ligand for receptor CD47. Modulates nitrous oxide (NO) signaling via CD47, hence playing a role as a pressor agent, supporting blood pressure. Plays a role in endothelial cell senescence, acting via CD47, by increasing the abundance and activation of NADPH oxidase NOX1, and so generating excess ROS. Inhibits stem cell self-renewal, acting via CD47 signaling, probably by regulation of the stem cell transcription factors POU5F1/OCT4, SOX2, MYC/c-Myc and KLF4. Negatively modulates wound healing, acting via CD47. Ligand for receptor CD36. Involved in inducing apoptosis in podocytes in response to elevated free fatty acids, acting via CD36. Plays a role in suppressing angiogenesis, acting, depending on context, via CD36 or CD47. Promotes cellular senescence in a TP53-CDKN1A-RB1 signaling-dependent manner. Ligand for immunoglobulin-like cell surface receptor SIRPA. Involved in ROS signaling in non-phagocytic cells, stimulating NADPH oxidase-derived ROS production, acting via interaction with SIRPA. Plays a role in metabolic dysfunction in diet-induced obesity, perhaps acting by exacerbating adipose inflammatory activity; its effects may be mediated, at least in part, through enhanced adipocyte proliferation. Plays a role in ER stress response, via its interaction with the activating transcription factor 6 alpha (ATF6) which produces adaptive ER stress response factors. May be involved in age-related conditions, including metabolic dysregulation, during normal aging. The chain is Thrombospondin-1 (THBS1) from Bos taurus (Bovine).